Reading from the N-terminus, the 310-residue chain is Methionyl-tRNA formyltransferase (310 aa).

109–112 (SLLP) provides a ligand contact to (6S)-5,6,7,8-tetrahydrofolate.

This sequence belongs to the Fmt family.

The enzyme catalyses L-methionyl-tRNA(fMet) + (6R)-10-formyltetrahydrofolate = N-formyl-L-methionyl-tRNA(fMet) + (6S)-5,6,7,8-tetrahydrofolate + H(+). Attaches a formyl group to the free amino group of methionyl-tRNA(fMet). The formyl group appears to play a dual role in the initiator identity of N-formylmethionyl-tRNA by promoting its recognition by IF2 and preventing the misappropriation of this tRNA by the elongation apparatus. This chain is Methionyl-tRNA formyltransferase, found in Staphylococcus epidermidis (strain ATCC 35984 / DSM 28319 / BCRC 17069 / CCUG 31568 / BM 3577 / RP62A).